A 341-amino-acid polypeptide reads, in one-letter code: Phenylalanine--tRNA ligase alpha subunit (341 aa).

Residue glutamate 259 coordinates Mg(2+).

The protein belongs to the class-II aminoacyl-tRNA synthetase family. Phe-tRNA synthetase alpha subunit type 1 subfamily. Tetramer of two alpha and two beta subunits. Mg(2+) serves as cofactor.

It is found in the cytoplasm. It carries out the reaction tRNA(Phe) + L-phenylalanine + ATP = L-phenylalanyl-tRNA(Phe) + AMP + diphosphate + H(+). This is Phenylalanine--tRNA ligase alpha subunit from Mycobacterium tuberculosis (strain ATCC 25177 / H37Ra).